A 470-amino-acid polypeptide reads, in one-letter code: 3-isopropylmalate dehydratase large subunit (470 aa).

Residues Cys-349, Cys-409, and Cys-412 each coordinate [4Fe-4S] cluster.

Belongs to the aconitase/IPM isomerase family. LeuC type 1 subfamily. Heterodimer of LeuC and LeuD. [4Fe-4S] cluster serves as cofactor.

It carries out the reaction (2R,3S)-3-isopropylmalate = (2S)-2-isopropylmalate. It functions in the pathway amino-acid biosynthesis; L-leucine biosynthesis; L-leucine from 3-methyl-2-oxobutanoate: step 2/4. Functionally, catalyzes the isomerization between 2-isopropylmalate and 3-isopropylmalate, via the formation of 2-isopropylmaleate. In Koribacter versatilis (strain Ellin345), this protein is 3-isopropylmalate dehydratase large subunit.